The following is a 133-amino-acid chain: MATSDTIGDMLTRIRNANLARHPTTEVPATRMTRSIAQVLKNEGFINDFEEIGDGVKLNLVISLKYRGKQRQPTITALKRISKPGLRVYSNRRELPRVLGGIGIAIISTSSGIMTDRDARRSGVGGEVLCYVW.

Belongs to the universal ribosomal protein uS8 family. In terms of assembly, part of the 30S ribosomal subunit. Contacts proteins S5 and S12.

In terms of biological role, one of the primary rRNA binding proteins, it binds directly to 16S rRNA central domain where it helps coordinate assembly of the platform of the 30S subunit. This is Small ribosomal subunit protein uS8 from Cyanothece sp. (strain PCC 7425 / ATCC 29141).